A 149-amino-acid polypeptide reads, in one-letter code: Calmodulin (149 aa).

An N-acetylalanine modification is found at A2. EF-hand domains are found at residues 8–43 (EQIA…LGQN), 44–79 (PTEA…KMKD), 81–116 (DTEE…LGEK), and 117–149 (LTDE…MMAK). Residues D21, D23, D25, T27, E32, D57, D59, N61, T63, E68, D94, D96, N98, and E105 each contribute to the Ca(2+) site. Residue K116 is modified to N6,N6,N6-trimethyllysine. Positions 130, 132, 134, 136, and 141 each coordinate Ca(2+).

It belongs to the calmodulin family.

Its function is as follows. Calmodulin mediates the control of a large number of enzymes, ion channels and other proteins by Ca(2+). Among the enzymes to be stimulated by the calmodulin-Ca(2+) complex are a number of protein kinases and phosphatases. This is Calmodulin from Tetrahymena pyriformis.